Here is a 138-residue protein sequence, read N- to C-terminus: Gastrula zinc finger protein XlCGF44.2 (138 aa).

5 C2H2-type zinc fingers span residues 5 to 27 (FACTKCKRRFCSNKELFSHKRIH), 32 to 54 (FVCAVCGKYFSDRIILQAHQRLH), 60 to 82 (FTCTQCHKSFLYKRNLHQHQQIH), 88 to 110 (YVCSTCGKQLKSKLTLNQHMKTH), and 116 to 138 (FACSECSKSFRFKAHLHRHQESH).

The protein belongs to the krueppel C2H2-type zinc-finger protein family.

The protein localises to the nucleus. May be involved in transcriptional regulation. This chain is Gastrula zinc finger protein XlCGF44.2, found in Xenopus laevis (African clawed frog).